Consider the following 137-residue polypeptide: Putative pre-16S rRNA nuclease (137 aa).

Belongs to the YqgF nuclease family.

The protein localises to the cytoplasm. Its function is as follows. Could be a nuclease involved in processing of the 5'-end of pre-16S rRNA. The polypeptide is Putative pre-16S rRNA nuclease (Clostridium botulinum (strain Eklund 17B / Type B)).